Consider the following 356-residue polypeptide: Protein-arginine kinase (356 aa).

Residues 24–254 (IVLSSRIRLA…MQLIQQERAA (231 aa)) form the Phosphagen kinase C-terminal domain. Residues 27–31 (SSRIR), His91, Arg125, 176–180 (RASVM), and 207–212 (RGIYGE) each bind ATP. An RDXXRA motif of the pArg binding pocket involved in allosteric regulation motif is present at residues 337–342 (RDERRA).

It belongs to the ATP:guanido phosphotransferase family.

It carries out the reaction L-arginyl-[protein] + ATP = N(omega)-phospho-L-arginyl-[protein] + ADP + H(+). With respect to regulation, appears to be allosterically activated by the binding of pArg-containing polypeptides to the pArg-binding pocket localized in the C-terminal domain of McsB. Catalyzes the specific phosphorylation of arginine residues in a large number of proteins. Is part of the bacterial stress response system. Protein arginine phosphorylation has a physiologically important role and is involved in the regulation of many critical cellular processes, such as protein homeostasis, motility, competence, and stringent and stress responses, by regulating gene expression and protein activity. This chain is Protein-arginine kinase, found in Halalkalibacterium halodurans (strain ATCC BAA-125 / DSM 18197 / FERM 7344 / JCM 9153 / C-125) (Bacillus halodurans).